The sequence spans 364 residues: PqqA peptide cyclase (364 aa).

Positions V6 to P222 constitute a Radical SAM core domain. Residues C20, C24, and C27 each contribute to the [4Fe-4S] cluster site.

Belongs to the radical SAM superfamily. PqqE family. In terms of assembly, interacts with PqqD. The interaction is necessary for activity of PqqE. It depends on [4Fe-4S] cluster as a cofactor.

The catalysed reaction is [PQQ precursor protein] + S-adenosyl-L-methionine = E-Y cross-linked-[PQQ precursor protein] + 5'-deoxyadenosine + L-methionine + H(+). Its pathway is cofactor biosynthesis; pyrroloquinoline quinone biosynthesis. Catalyzes the cross-linking of a glutamate residue and a tyrosine residue in the PqqA protein as part of the biosynthesis of pyrroloquinoline quinone (PQQ). This Streptomyces rochei (Streptomyces parvullus) protein is PqqA peptide cyclase.